The following is a 239-amino-acid chain: tRNA (guanine-N(7)-)-methyltransferase (239 aa).

Residues Glu-69, Glu-94, Asp-121, and Asp-144 each coordinate S-adenosyl-L-methionine. Residue Asp-144 is part of the active site. Substrate contacts are provided by residues Lys-148, Asp-180, and 217–220 (TKFE).

This sequence belongs to the class I-like SAM-binding methyltransferase superfamily. TrmB family.

It catalyses the reaction guanosine(46) in tRNA + S-adenosyl-L-methionine = N(7)-methylguanosine(46) in tRNA + S-adenosyl-L-homocysteine. It participates in tRNA modification; N(7)-methylguanine-tRNA biosynthesis. Catalyzes the formation of N(7)-methylguanine at position 46 (m7G46) in tRNA. The sequence is that of tRNA (guanine-N(7)-)-methyltransferase from Pseudoalteromonas atlantica (strain T6c / ATCC BAA-1087).